Here is a 468-residue protein sequence, read N- to C-terminus: 6-phosphogluconate dehydrogenase, NAD(+)-dependent, decarboxylating (468 aa).

NAD(+)-binding positions include 9–14 (GLGVMG), 32–34 (NYT), 73–75 (VTA), and Asn-101. Residues Asn-101 and 127 to 129 (SGG) each bind substrate. The active-site Proton acceptor is Lys-181. 184–185 (HN) provides a ligand contact to substrate. Catalysis depends on Glu-188, which acts as the Proton donor. Positions 189, 259, 286, 445, and 451 each coordinate substrate.

It belongs to the 6-phosphogluconate dehydrogenase family. Homodimer.

The catalysed reaction is 6-phospho-D-gluconate + NAD(+) = D-ribulose 5-phosphate + CO2 + NADH. Functionally, catalyzes the oxidative decarboxylation of 6-phosphogluconate to ribulose 5-phosphate and CO(2), with concomitant reduction of NAD to NADH. Does not contribute to oxidative pentose phosphate (PP) pathway fluxes during growth on glucose. The functional role of GntZ remains obscure. In Bacillus subtilis (strain 168), this protein is 6-phosphogluconate dehydrogenase, NAD(+)-dependent, decarboxylating (gntZ).